A 318-amino-acid chain; its full sequence is UDP-N-acetylenolpyruvoylglucosamine reductase (318 aa).

Residues 38 to 204 form the FAD-binding PCMH-type domain; that stretch reads IGGICPVVVE…LGIEILLKEG (167 aa). Arginine 182 is a catalytic residue. Residues 212 to 232 are disordered; it reads SLKDKRDRRNSSQPENKKSAG. The segment covering 213-229 has biased composition (basic and acidic residues); sequence LKDKRDRRNSSQPENKK. The active-site Proton donor is serine 233. Glutamate 310 is an active-site residue.

This sequence belongs to the MurB family. FAD serves as cofactor.

The protein localises to the cytoplasm. The catalysed reaction is UDP-N-acetyl-alpha-D-muramate + NADP(+) = UDP-N-acetyl-3-O-(1-carboxyvinyl)-alpha-D-glucosamine + NADPH + H(+). The protein operates within cell wall biogenesis; peptidoglycan biosynthesis. Functionally, cell wall formation. The sequence is that of UDP-N-acetylenolpyruvoylglucosamine reductase from Leptospira borgpetersenii serovar Hardjo-bovis (strain L550).